We begin with the raw amino-acid sequence, 1714 residues long: Intersectin-1 (1714 aa).

One can recognise an EH 1 domain in the interval 21–109; the sequence is ERAKHDQQFL…PVMKQQPVAI (89 aa). The EF-hand 1 domain maps to 53–88; sequence LPQPVLAQIWALADMNNDGRMDQVEFSIAMKLIKLK. The Ca(2+) site is built by aspartate 66, asparagine 68, aspartate 70, arginine 72, and glutamate 77. Serine 203 carries the phosphoserine modification. One can recognise an EH 2 domain in the interval 221-310; it reads SRLKYRQLFN…PEYIPPSFRR (90 aa). The EF-hand 2 domain maps to 254 to 289; sequence LPQAQLASIWNLSDIDQDGKLTAEEFILAMHLIDVA. Positions 267, 269, 271, 273, and 278 each coordinate Ca(2+). The segment covering 310-325 has biased composition (low complexity); sequence RVRSGSGMSVISSSSV. 2 disordered regions span residues 310–356 and 614–706; these read RVRS…KREN and SKQQ…QSRL. Serine 318, serine 334, and serine 335 each carry phosphoserine. Positions 326–702 are KLERQ; sequence DQRLPEEPSS…ERAKPEMQDK (377 aa). Composition is skewed to basic and acidic residues over residues 340-356 and 622-706; these read QPEK…KREN and RSLE…QSRL. A coiled-coil region spans residues 354–658; sequence RENFERGSVE…QRRVQERDKQ (305 aa). Position 685 is a phosphoserine (serine 685). In terms of domain architecture, SH3 1 spans 738 to 799; it reads VKVVYYRALY…PANYAEKIPE (62 aa). The segment at 827 to 863 is disordered; it reads APLPVTSSEPSTTPNNWADFSSTWPSSSNEKPETDNW. Positions 831 to 855 are enriched in polar residues; sequence VTSSEPSTTPNNWADFSSTWPSSSN. Threonine 890 is modified (phosphothreonine). Residues serine 894, serine 895, and serine 897 each carry the phosphoserine modification. Residues 906 to 964 form the SH3 2 domain; that stretch reads VEGLQAQALYPWRAKKDNHLNFNKSDVITVLEQQDMWWFGEVQGQKGWFPKSYVKLISG. Serine 971 is subject to Phosphoserine. Threonine 977 carries the phosphothreonine modification. Phosphoserine is present on residues serine 979 and serine 988. SH3 domains follow at residues 995-1053 and 1067-1131; these read IPGE…LKDS and KKPE…LLSP. The tract at residues 1067-1131 is required for interaction with FCHSD2; that stretch reads KKPEIAQVIA…PANYVKLLSP (65 aa). A Bipartite nuclear localization signal; in isoform 2 motif is present at residues 1097–1120; the sequence is RKKNPGGWWEGELQARGKKRQIGW. A Phosphoserine modification is found at serine 1130. A Phosphothreonine modification is found at threonine 1137. The region spanning 1148–1207 is the SH3 5 domain; sequence PAVCQVIGMYDYTAQNDDELAFSKGQIINVLNKEDPDWWKGEVSGQVGLFPSNYVKLTTD. The DH domain occupies 1230 to 1416; the sequence is KRQGYIHELI…EELCSQVNEG (187 aa). Positions 1455 to 1564 constitute a PH domain; it reads KFLHSGKLYK…WVQKIKAASE (110 aa). The 117-residue stretch at 1572-1688 folds into the C2 domain; the sequence is KKREKAYLVR…KKDQGSKGPV (117 aa). The residue at position 1638 (serine 1638) is a Phosphoserine. Residues aspartate 1660, serine 1663, and aspartate 1666 each contribute to the Ca(2+) site.

In terms of assembly, interacts (via DH domain) with CDC42. Interacts (via SH3 domain 1) with WASL. Interacts with dynamin, SNAP25 and SNAP23. Interacts with clathrin-associated proteins and other components of the endocytic machinery, such as SPIN90, EPS15, EPN1, EPN2, STON2, FCHO1, FCHO2 and DAB2. Interacts (via SH3 domains) with REPS1 and SGIP1. Interacts with ARHGAP31. Interacts with ADAM15. Interacts with PRRT2. Interacts (via SH3 domain 4) with FCHSD2 (via SH3 domain 2). Interacts (via SH3 domain 1) with DENND2B. Interacts (via SH3 domains) with CBL. Isoform 2: Interacts with CBL and DNM1. Isoform 2: Interacts with LMNA. Isoform 2: Interacts with importin subunit KPNA1; this is likely to mediate its import into the nucleus. Interacts with DNM2. Ca(2+) serves as cofactor. In terms of tissue distribution, detected in brain, adrenal gland and heart. Detected in neurons at the calyx of Held (at protein level). Isoform 1: Primarily detected in brain neurons. Isoform 2: Primarily detected in glia (at protein level). Widely expressed. Expressed at high levels in brain, heart and skeletal muscle.

Its subcellular location is the endomembrane system. The protein localises to the synapse. It is found in the synaptosome. It localises to the cell projection. The protein resides in the lamellipodium. Its subcellular location is the cell membrane. The protein localises to the membrane. It is found in the clathrin-coated pit. It localises to the recycling endosome. The protein resides in the endosome. Its subcellular location is the cytoplasmic vesicle. The protein localises to the cytoplasm. It is found in the nucleus envelope. Adapter protein that provides a link between the endocytic membrane traffic and the actin assembly machinery. Acts as a guanine nucleotide exchange factor (GEF) for CDC42, and thereby stimulates actin nucleation mediated by WASL and the ARP2/3 complex. Plays a role in the assembly and maturation of clathrin-coated vesicles. Recruits FCHSD2 to clathrin-coated pits. Involved in endocytosis of activated EGFR, and probably also other growth factor receptors. Involved in endocytosis of integrin beta-1 (ITGB1) and transferrin receptor (TFR); internalization of ITGB1 as DAB2-dependent cargo but not TFR may involve association with DAB2. Promotes ubiquitination and subsequent degradation of EGFR, and thereby contributes to the down-regulation of EGFR-dependent signaling pathways. In chromaffin cells, required for normal exocytosis of catecholamines. Required for rapid replenishment of release-ready synaptic vesicles at presynaptic active zones. Inhibits ARHGAP31 activity toward RAC1. Its function is as follows. Plays a role in synaptic vesicle endocytosis in brain neurons. The protein is Intersectin-1 of Mus musculus (Mouse).